The chain runs to 263 residues: Post-GPI attachment to proteins factor 2 (263 aa).

A run of 6 helical transmembrane segments spans residues 16-36 (FVFC…LLSL), 69-89 (YIWR…AVAF), 109-129 (FLCN…LALT), 143-163 (CFGG…WLFS), 180-200 (YKIL…YLYW), and 208-228 (PGIY…NIFF).

It belongs to the PGAP2 family.

It is found in the golgi apparatus membrane. The protein localises to the endoplasmic reticulum membrane. Involved in the lipid remodeling steps of GPI-anchor maturation. Required for stable expression of GPI-anchored proteins at the cell surface. The sequence is that of Post-GPI attachment to proteins factor 2 from Caenorhabditis briggsae.